The sequence spans 317 residues: MPVQGSQRRLLGSLNSTPTATPHLGLAANQTGARCLEVSIPDGLFLSLGLVSLVENVLVVTAIAKNRNLHSPMYCFICCLALSDLLVSGSNMLETAVILLLEAGALAARAAVVQQLDNVIDVITCSSMLSSLCFLGAIAVDRYISIFYALRYHSIVTLPRARRAVAAIWVASVLFSMLFIAYYDHAAVLLCLVVFFLAMLVLMAVLYVHMLARACQHAQGIARLHKRQRPAHQSFGLKGAATLTILLGIFFLCWGPFFLHLTLIVLCPQHPTCSCIFKNFNLFLTLIICNAIIDPLIYAFRSQELRRTLKEVLLCSW.

The Extracellular portion of the chain corresponds to 1–37 (MPVQGSQRRLLGSLNSTPTATPHLGLAANQTGARCLE). N29 carries N-linked (GlcNAc...) asparagine glycosylation. Residues 38 to 63 (VSIPDGLFLSLGLVSLVENVLVVTAI) form a helical membrane-spanning segment. Over 64–72 (AKNRNLHSP) the chain is Cytoplasmic. The helical transmembrane segment at 73–93 (MYCFICCLALSDLLVSGSNML) threads the bilayer. Over 94 to 118 (ETAVILLLEAGALAARAAVVQQLDN) the chain is Extracellular. The helical transmembrane segment at 119–140 (VIDVITCSSMLSSLCFLGAIAV) threads the bilayer. Residues 141 to 163 (DRYISIFYALRYHSIVTLPRARR) are Cytoplasmic-facing. The chain crosses the membrane as a helical span at residues 164 to 183 (AVAAIWVASVLFSMLFIAYY). The Extracellular segment spans residues 184–191 (DHAAVLLC). The helical transmembrane segment at 192–211 (LVVFFLAMLVLMAVLYVHML) threads the bilayer. Over 212-240 (ARACQHAQGIARLHKRQRPAHQSFGLKGA) the chain is Cytoplasmic. Residues 241-266 (ATLTILLGIFFLCWGPFFLHLTLIVL) form a helical membrane-spanning segment. Topologically, residues 267–279 (CPQHPTCSCIFKN) are extracellular. Residues 280 to 300 (FNLFLTLIICNAIIDPLIYAF) traverse the membrane as a helical segment. Topologically, residues 301 to 317 (RSQELRRTLKEVLLCSW) are cytoplasmic. A lipid anchor (S-palmitoyl cysteine) is attached at C315.

This sequence belongs to the G-protein coupled receptor 1 family. In terms of assembly, interacts with MGRN1, but does not undergo MGRN1-mediated ubiquitination; this interaction competes with GNAS-binding and thus inhibits agonist-induced cAMP production. Interacts with OPN3; the interaction results in a decrease in MC1R-mediated cAMP signaling and ultimately a decrease in melanin production in melanocytes.

The protein resides in the cell membrane. In terms of biological role, receptor for MSH (alpha, beta and gamma) and ACTH. The activity of this receptor is mediated by G proteins which activate adenylate cyclase. Mediates melanogenesis, the production of eumelanin (black/brown) and phaeomelanin (red/yellow), via regulation of cAMP signaling in melanocytes. The chain is Melanocyte-stimulating hormone receptor (MC1R) from Erythrocebus patas (Red guenon).